The following is a 250-amino-acid chain: Small ribosomal subunit protein uS3 (250 aa).

Residues 39-111 form the KH type-2 domain; the sequence is IRTLIKNNYP…KVQINIFEVK (73 aa).

Belongs to the universal ribosomal protein uS3 family. As to quaternary structure, part of the 30S ribosomal subunit. Forms a tight complex with proteins S10 and S14.

In terms of biological role, binds the lower part of the 30S subunit head. Binds mRNA in the 70S ribosome, positioning it for translation. The chain is Small ribosomal subunit protein uS3 from Alder yellows phytoplasma.